Consider the following 473-residue polypeptide: ATP synthase subunit beta (473 aa).

An ATP-binding site is contributed by 153 to 160; that stretch reads GGAGVGKT.

It belongs to the ATPase alpha/beta chains family. As to quaternary structure, F-type ATPases have 2 components, CF(1) - the catalytic core - and CF(0) - the membrane proton channel. CF(1) has five subunits: alpha(3), beta(3), gamma(1), delta(1), epsilon(1). CF(0) has three main subunits: a(1), b(2) and c(9-12). The alpha and beta chains form an alternating ring which encloses part of the gamma chain. CF(1) is attached to CF(0) by a central stalk formed by the gamma and epsilon chains, while a peripheral stalk is formed by the delta and b chains.

The protein resides in the cell inner membrane. The enzyme catalyses ATP + H2O + 4 H(+)(in) = ADP + phosphate + 5 H(+)(out). In terms of biological role, produces ATP from ADP in the presence of a proton gradient across the membrane. The catalytic sites are hosted primarily by the beta subunits. In Rickettsia akari (strain Hartford), this protein is ATP synthase subunit beta.